Consider the following 251-residue polypeptide: BRI3-binding protein (251 aa).

Helical transmembrane passes span 13-33, 125-145, 146-166, and 185-205; these read AGLLLLLLLLLLLGLLAPGAQ, ALLLVGVVLLAYWFLSLTLGF, TFSVLHVVFGRFFWIVRVVLF, and VLPLCFVVAVYFMTGPMGFYW. Positions 217–247 form a coiled coil; sequence NPSVEEKLEHLEKQVRLLNIRLNRVLESLDR. K229 carries the N6-acetyllysine modification. Position 248 is a phosphoserine (S248).

As to quaternary structure, interacts with LETMD1. Interacts with BRI3 (isoforms 1 and 2); the interaction with isoform 2 is weaker than with isoform 1. Interacts with BRI3; the interaction is weak. Interacts with TMEM238L. As to expression, most abundantly expressed in brain, liver and kidney. Overexpressed in leukemia and lymphoma cell lines, as well as in various carcinomas.

The protein resides in the mitochondrion outer membrane. Its function is as follows. Involved in tumorigenesis and may function by stabilizing p53/TP53. The chain is BRI3-binding protein from Homo sapiens (Human).